Consider the following 421-residue polypeptide: eIF5-mimic protein 1 (421 aa).

Residues 1-24 (MNTGKQQKPVLTGQRFKTRKRDEK) form a disordered region. The W2 domain maps to 250–417 (TQQTLGTRKE…QNAEEESESE (168 aa)).

It belongs to the BZW family.

It localises to the cytoplasm. Translation initiation regulator which may repress non-AUG initiated translation and repeat-associated non-AUG (RAN) initiated translation by acting as a competitive inhibitor of eukaryotic translation initiation factor 5 (EIF5) function. This chain is eIF5-mimic protein 1 (bzw2), found in Danio rerio (Zebrafish).